The following is a 355-amino-acid chain: UDP-N-acetylglucosamine--N-acetylmuramyl-(pentapeptide) pyrophosphoryl-undecaprenol N-acetylglucosamine transferase (355 aa).

Residues 15–17 (TGG), asparagine 127, arginine 163, serine 191, isoleucine 244, 263–268 (ALTVSE), and glutamine 288 contribute to the UDP-N-acetyl-alpha-D-glucosamine site.

Belongs to the glycosyltransferase 28 family. MurG subfamily.

It localises to the cell inner membrane. The enzyme catalyses di-trans,octa-cis-undecaprenyl diphospho-N-acetyl-alpha-D-muramoyl-L-alanyl-D-glutamyl-meso-2,6-diaminopimeloyl-D-alanyl-D-alanine + UDP-N-acetyl-alpha-D-glucosamine = di-trans,octa-cis-undecaprenyl diphospho-[N-acetyl-alpha-D-glucosaminyl-(1-&gt;4)]-N-acetyl-alpha-D-muramoyl-L-alanyl-D-glutamyl-meso-2,6-diaminopimeloyl-D-alanyl-D-alanine + UDP + H(+). The protein operates within cell wall biogenesis; peptidoglycan biosynthesis. Cell wall formation. Catalyzes the transfer of a GlcNAc subunit on undecaprenyl-pyrophosphoryl-MurNAc-pentapeptide (lipid intermediate I) to form undecaprenyl-pyrophosphoryl-MurNAc-(pentapeptide)GlcNAc (lipid intermediate II). In Escherichia coli O127:H6 (strain E2348/69 / EPEC), this protein is UDP-N-acetylglucosamine--N-acetylmuramyl-(pentapeptide) pyrophosphoryl-undecaprenol N-acetylglucosamine transferase.